A 235-amino-acid chain; its full sequence is Urease accessory protein UreF (235 aa).

Belongs to the UreF family. As to quaternary structure, ureD, UreF and UreG form a complex that acts as a GTP-hydrolysis-dependent molecular chaperone, activating the urease apoprotein by helping to assemble the nickel containing metallocenter of UreC. The UreE protein probably delivers the nickel.

The protein localises to the cytoplasm. Its function is as follows. Required for maturation of urease via the functional incorporation of the urease nickel metallocenter. The protein is Urease accessory protein UreF of Psychrobacter cryohalolentis (strain ATCC BAA-1226 / DSM 17306 / VKM B-2378 / K5).